A 526-amino-acid chain; its full sequence is Outer capsid protein VP5 (526 aa).

The segment at 1–42 is involved in membrane permeabilization; the sequence is MGKVIRSLNRFGKKVGNALTSNTAKKIYSTIGKAADEFLESE.

It belongs to the orbivirus VP5 family.

The protein resides in the virion. In terms of biological role, VP5 protein is one of the two proteins (with VP2) which constitute the virus particle outer capsid. Acts as a membrane permeabilization protein that mediates release of viral particles from endosomal compartments into the cytoplasm. Permeabilization activity is probably negatively regulated by VP2 and is triggered by endosomal degradation of VP2 and exposure to low pH. The chain is Outer capsid protein VP5 (Segment-6) from Bluetongue virus 1 (isolate South Africa) (BTV 1).